A 944-amino-acid chain; its full sequence is Isoleucine--tRNA ligase (944 aa).

Residues 58 to 68 (PYANGDIHIGH) carry the 'HIGH' region motif. E568 is a binding site for L-isoleucyl-5'-AMP. Residues 609-613 (KMSKS) carry the 'KMSKS' region motif. K612 contributes to the ATP binding site. Zn(2+) contacts are provided by C907, C910, C927, and C930.

This sequence belongs to the class-I aminoacyl-tRNA synthetase family. IleS type 1 subfamily. Monomer. The cofactor is Zn(2+).

It is found in the cytoplasm. The catalysed reaction is tRNA(Ile) + L-isoleucine + ATP = L-isoleucyl-tRNA(Ile) + AMP + diphosphate. Catalyzes the attachment of isoleucine to tRNA(Ile). As IleRS can inadvertently accommodate and process structurally similar amino acids such as valine, to avoid such errors it has two additional distinct tRNA(Ile)-dependent editing activities. One activity is designated as 'pretransfer' editing and involves the hydrolysis of activated Val-AMP. The other activity is designated 'posttransfer' editing and involves deacylation of mischarged Val-tRNA(Ile). The polypeptide is Isoleucine--tRNA ligase (Psychromonas ingrahamii (strain DSM 17664 / CCUG 51855 / 37)).